The following is a 721-amino-acid chain: S-adenosyl-L-methionine-dependent tRNA 4-demethylwyosine synthase TYW1 (721 aa).

Residues 71-229 (VKIFYGSQTG…DFTAWKTKFI (159 aa)) enclose the Flavodoxin-like domain. FMN is bound by residues 77–81 (SQTGT) and 168–200 (VFGL…QRVL). Disordered stretches follow at residues 242 to 291 (ACGG…ELGT) and 305 to 339 (DLGN…TEDG). Residues 250 to 274 (GKCESAQHGPGEARPHPQGELHPGD) are compositionally biased toward basic and acidic residues. A compositionally biased stretch (acidic residues) spans 275-290 (AEEEEPCESSSEDELG). Positions 313–325 (VKREKREKSHQDG) are enriched in basic and acidic residues. Positions 389-635 (YGIESHRCME…LLPDYEVACE (247 aa)) constitute a Radical SAM core domain. Positions 405, 409, and 412 each coordinate [4Fe-4S] cluster.

Belongs to the TYW1 family. [4Fe-4S] cluster is required as a cofactor.

It catalyses the reaction N(1)-methylguanosine(37) in tRNA(Phe) + pyruvate + S-adenosyl-L-methionine = 4-demethylwyosine(37) in tRNA(Phe) + 5'-deoxyadenosine + L-methionine + CO2 + H2O. It functions in the pathway tRNA modification; wybutosine-tRNA(Phe) biosynthesis. Probable component of the wybutosine biosynthesis pathway. Wybutosine is a hyper modified guanosine with a tricyclic base found at the 3'-position adjacent to the anticodon of eukaryotic phenylalanine tRNA. Catalyzes the condensation of N-methylguanine with 2 carbon atoms from pyruvate to form the tricyclic 4-demethylwyosine, an intermediate in wybutosine biosynthesis. The polypeptide is S-adenosyl-L-methionine-dependent tRNA 4-demethylwyosine synthase TYW1 (Tyw1) (Mus musculus (Mouse)).